We begin with the raw amino-acid sequence, 109 residues long: uncharacterized protein (109 aa).

This is an uncharacterized protein from Autographa californica nuclear polyhedrosis virus (AcMNPV).